The chain runs to 428 residues: Enolase (428 aa).

Residue Gln162 participates in (2R)-2-phosphoglycerate binding. The active-site Proton donor is the Glu204. Residues Asp241, Glu283, and Asp310 each coordinate Mg(2+). Residues Lys335, Arg364, Ser365, and Lys386 each coordinate (2R)-2-phosphoglycerate. Lys335 acts as the Proton acceptor in catalysis.

Belongs to the enolase family. The cofactor is Mg(2+).

The protein localises to the cytoplasm. The protein resides in the secreted. It localises to the cell surface. It carries out the reaction (2R)-2-phosphoglycerate = phosphoenolpyruvate + H2O. It functions in the pathway carbohydrate degradation; glycolysis; pyruvate from D-glyceraldehyde 3-phosphate: step 4/5. Its function is as follows. Catalyzes the reversible conversion of 2-phosphoglycerate (2-PG) into phosphoenolpyruvate (PEP). It is essential for the degradation of carbohydrates via glycolysis. In Rhodococcus jostii (strain RHA1), this protein is Enolase.